The following is a 350-amino-acid chain: Alcohol dehydrogenase (350 aa).

Residue Cys-46 participates in Zn(2+) binding. NAD(+) contacts are provided by His-47, Thr-48, and His-51. His-69, Cys-100, Cys-103, Cys-106, Cys-114, and Cys-156 together coordinate Zn(2+). Gly-183, Gly-184, Leu-185, and Asp-204 together coordinate NAD(+). Position 205 is a phosphothreonine (Thr-205). Residues Lys-209 and Phe-224 each coordinate NAD(+). Phosphothreonine is present on Thr-250. Val-271, Met-273, Ser-296, Val-298, and Arg-343 together coordinate NAD(+).

It belongs to the zinc-containing alcohol dehydrogenase family. In terms of assembly, homotetramer. It depends on Zn(2+) as a cofactor.

It is found in the cytoplasm. It carries out the reaction a primary alcohol + NAD(+) = an aldehyde + NADH + H(+). The catalysed reaction is a secondary alcohol + NAD(+) = a ketone + NADH + H(+). The enzyme catalyses ethanol + NAD(+) = acetaldehyde + NADH + H(+). Functionally, reduces acetaldehyde to ethanol during the fermentation of glucose. The sequence is that of Alcohol dehydrogenase (adh1) from Schizosaccharomyces pombe (strain 972 / ATCC 24843) (Fission yeast).